A 748-amino-acid chain; its full sequence is 5-methyltetrahydropteroyltriglutamate--homocysteine methyltransferase (748 aa).

Residues 18–21 (REWK) and Lys-112 each bind 5-methyltetrahydropteroyltri-L-glutamate. Residues 420 to 422 (IGS) and Glu-473 each bind L-homocysteine. Residues 420–422 (IGS) and Glu-473 contribute to the L-methionine site. Position 550 (Trp-550) interacts with 5-methyltetrahydropteroyltri-L-glutamate. Position 588 (Asp-588) interacts with L-homocysteine. Asp-588 contributes to the L-methionine binding site. Position 594 (Glu-594) interacts with 5-methyltetrahydropteroyltri-L-glutamate. 3 residues coordinate Zn(2+): His-630, Cys-632, and Glu-654. His-683 acts as the Proton donor in catalysis. Zn(2+) is bound at residue Cys-715.

Belongs to the vitamin-B12 independent methionine synthase family. Zn(2+) is required as a cofactor.

It carries out the reaction 5-methyltetrahydropteroyltri-L-glutamate + L-homocysteine = tetrahydropteroyltri-L-glutamate + L-methionine. The protein operates within amino-acid biosynthesis; L-methionine biosynthesis via de novo pathway; L-methionine from L-homocysteine (MetE route): step 1/1. In terms of biological role, catalyzes the transfer of a methyl group from 5-methyltetrahydrofolate to homocysteine resulting in methionine formation. The polypeptide is 5-methyltetrahydropteroyltriglutamate--homocysteine methyltransferase (Staphylococcus epidermidis (strain ATCC 35984 / DSM 28319 / BCRC 17069 / CCUG 31568 / BM 3577 / RP62A)).